The following is a 358-amino-acid chain: Peptide chain release factor 1 (358 aa).

Gln234 carries the N5-methylglutamine modification.

This sequence belongs to the prokaryotic/mitochondrial release factor family. Post-translationally, methylated by PrmC. Methylation increases the termination efficiency of RF1.

The protein localises to the cytoplasm. Peptide chain release factor 1 directs the termination of translation in response to the peptide chain termination codons UAG and UAA. The sequence is that of Peptide chain release factor 1 from Chloroherpeton thalassium (strain ATCC 35110 / GB-78).